A 187-amino-acid chain; its full sequence is Proline-rich protein 29 (187 aa).

The disordered stretch occupies residues 133 to 187 (HQPPWQGEPRIQHQPPASRQEEVRDVPPPPPPSATGTVGADVPPASDYYDAESLP).

In Mus musculus (Mouse), this protein is Proline-rich protein 29 (Prr29).